A 460-amino-acid polypeptide reads, in one-letter code: G2/mitotic-specific cyclin-4 (460 aa).

This sequence belongs to the cyclin family. Cyclin AB subfamily.

Functionally, essential for the control of the cell cycle at the G2/M (mitosis) transition. Interacts with the CDC2 protein kinase to form MPF. G2/M cyclins accumulate steadily during G2 and are abruptly destroyed at mitosis. The protein is G2/mitotic-specific cyclin-4 (CLB4) of Saccharomyces cerevisiae (strain ATCC 204508 / S288c) (Baker's yeast).